A 363-amino-acid polypeptide reads, in one-letter code: Type 3 secretion system translocon protein SctB (363 aa).

Residues 99 to 120 (ISSLSSNAVSLIISVAVLLSAL) traverse the membrane as a helical segment.

This sequence belongs to the SctB/SipC family. As to quaternary structure, the core secretion machinery of the T3SS is composed of approximately 20 different proteins, including cytoplasmic components, a base, an export apparatus and a needle. This subunit is involved in the formation of a pore, called the translocon, in host membrane.

It localises to the secreted. It is found in the host membrane. Functionally, component of the type III secretion system (T3SS), also called injectisome, which is used to inject bacterial effector proteins into eukaryotic host cells. IpaB/SctE and IpaC/SctB are inserted into the host membrane where they form a pore and allow the translocation of effector proteins into the cytosol of target cells. The sequence is that of Type 3 secretion system translocon protein SctB from Shigella dysenteriae.